We begin with the raw amino-acid sequence, 255 residues long: 4-hydroxy-tetrahydrodipicolinate reductase (255 aa).

Residues 9 to 14, 89 to 91, and 115 to 118 each bind NAD(+); these read GFKGKM, GTT, and APNF. Residue H145 is the Proton donor/acceptor of the active site. H146 lines the (S)-2,3,4,5-tetrahydrodipicolinate pocket. K149 acts as the Proton donor in catalysis. 155-156 serves as a coordination point for (S)-2,3,4,5-tetrahydrodipicolinate; that stretch reads GT.

It belongs to the DapB family.

It localises to the cytoplasm. The catalysed reaction is (S)-2,3,4,5-tetrahydrodipicolinate + NAD(+) + H2O = (2S,4S)-4-hydroxy-2,3,4,5-tetrahydrodipicolinate + NADH + H(+). The enzyme catalyses (S)-2,3,4,5-tetrahydrodipicolinate + NADP(+) + H2O = (2S,4S)-4-hydroxy-2,3,4,5-tetrahydrodipicolinate + NADPH + H(+). The protein operates within amino-acid biosynthesis; L-lysine biosynthesis via DAP pathway; (S)-tetrahydrodipicolinate from L-aspartate: step 4/4. Catalyzes the conversion of 4-hydroxy-tetrahydrodipicolinate (HTPA) to tetrahydrodipicolinate. In Streptococcus sanguinis (strain SK36), this protein is 4-hydroxy-tetrahydrodipicolinate reductase.